Reading from the N-terminus, the 901-residue chain is HTH-type transcriptional regulator MalT (901 aa).

39–46 contributes to the ATP binding site; sequence SPAGYGKT. In terms of domain architecture, HTH luxR-type spans 829-894; sequence ELIRTSPLTQ…AAVQHAQKLL (66 aa). A DNA-binding region (H-T-H motif) is located at residues 853–872; the sequence is NEQIAGELEVAATTIKTHIR.

It belongs to the MalT family. Monomer in solution. Oligomerizes to an active state in the presence of the positive effectors ATP and maltotriose.

With respect to regulation, activated by ATP and maltotriose, which are both required for DNA binding. Its function is as follows. Positively regulates the transcription of the maltose regulon whose gene products are responsible for uptake and catabolism of malto-oligosaccharides. Specifically binds to the promoter region of its target genes, recognizing a short DNA motif called the MalT box. The sequence is that of HTH-type transcriptional regulator MalT from Escherichia coli O7:K1 (strain IAI39 / ExPEC).